The following is a 223-amino-acid chain: Large ribosomal subunit protein uL3 (223 aa).

The protein belongs to the universal ribosomal protein uL3 family. In terms of assembly, part of the 50S ribosomal subunit. Forms a cluster with proteins L14 and L19.

Its function is as follows. One of the primary rRNA binding proteins, it binds directly near the 3'-end of the 23S rRNA, where it nucleates assembly of the 50S subunit. This chain is Large ribosomal subunit protein uL3, found in Mycoplasma capricolum subsp. capricolum (strain California kid / ATCC 27343 / NCTC 10154).